Reading from the N-terminus, the 60-residue chain is Large ribosomal subunit protein bL32 (60 aa).

The segment at 1–60 is disordered; it reads MAVQQVKKSRSKRDMRRSHDSLTGPTLSTDKSTGELHLRHHVSPNGFYKGKKVVDTKSED. Residues 7–16 show a composition bias toward basic residues; sequence KKSRSKRDMR.

Belongs to the bacterial ribosomal protein bL32 family.

This Francisella philomiragia subsp. philomiragia (strain ATCC 25017 / CCUG 19701 / FSC 153 / O#319-036) protein is Large ribosomal subunit protein bL32.